Reading from the N-terminus, the 314-residue chain is Olfactory receptor 4Q2 (314 aa).

Over 1–26 (MDKNQTEVMREFFLSGFSQTPSIEAG) the chain is Extracellular. Asn-4 is a glycosylation site (N-linked (GlcNAc...) asparagine). Residues 27–47 (LFVLFLFFYMSIWVGNVLIMV) traverse the membrane as a helical segment. At 48-61 (TVASDKYLNSSPMY) the chain is on the cytoplasmic side. A helical transmembrane segment spans residues 62-84 (FLLGNLSFLDLCYSTVTTPKLLA). The Extracellular segment spans residues 85-98 (DFFNHEKLISYDQC). A disulfide bridge links Cys-98 with Cys-181. A helical membrane pass occupies residues 99-119 (IVQLFFLHFVGAAEMFLLTVM). Over 120 to 142 (AYDRYVAICRPLHYTTVMSRGLC) the chain is Cytoplasmic. A helical transmembrane segment spans residues 143–163 (CVLVAASWMGGFVHSTVQTIL). Residues 164-196 (TVHLPFCGPNQVENTFFCDVPPVIKLACADTFV) lie on the Extracellular side of the membrane. A helical membrane pass occupies residues 197–217 (IELLMVSNSGLISTISFVVLI). Residues 218–236 (SSYTTILVKIRSKEGRRKA) are Cytoplasmic-facing. Residues 237-257 (LSTCASHLMVVTLFFGPCIFI) traverse the membrane as a helical segment. The Extracellular segment spans residues 258-268 (YARPFSTFSVD). A helical transmembrane segment spans residues 269–289 (KMVSVLYNVITPMLNPLIYTL). Topologically, residues 290-314 (RNKEVKSAMQKLWVRNGLTWKKQET) are cytoplasmic.

The protein belongs to the G-protein coupled receptor 1 family.

The protein localises to the cell membrane. Functionally, odorant receptor. The protein is Olfactory receptor 4Q2 (OR4Q2) of Homo sapiens (Human).